Consider the following 495-residue polypeptide: Glycerol kinase (495 aa).

An ADP-binding site is contributed by Thr11. ATP contacts are provided by Thr11, Thr12, and Ser13. Thr11 serves as a coordination point for sn-glycerol 3-phosphate. Arg15 lines the ADP pocket. Residues Arg81, Glu82, Tyr133, and Asp242 each contribute to the sn-glycerol 3-phosphate site. Arg81, Glu82, Tyr133, Asp242, and Gln243 together coordinate glycerol. Residues Thr264 and Gly307 each coordinate ADP. ATP-binding residues include Thr264, Gly307, Gln311, and Gly408. ADP contacts are provided by Gly408 and Asn412.

Belongs to the FGGY kinase family.

The catalysed reaction is glycerol + ATP = sn-glycerol 3-phosphate + ADP + H(+). Its pathway is polyol metabolism; glycerol degradation via glycerol kinase pathway; sn-glycerol 3-phosphate from glycerol: step 1/1. Inhibited by fructose 1,6-bisphosphate (FBP). Functionally, key enzyme in the regulation of glycerol uptake and metabolism. Catalyzes the phosphorylation of glycerol to yield sn-glycerol 3-phosphate. This Citrifermentans bemidjiense (strain ATCC BAA-1014 / DSM 16622 / JCM 12645 / Bem) (Geobacter bemidjiensis) protein is Glycerol kinase.